We begin with the raw amino-acid sequence, 147 residues long: Large ribosomal subunit protein uL22c (147 aa).

It belongs to the universal ribosomal protein uL22 family. As to quaternary structure, part of the 50S ribosomal subunit.

The protein resides in the plastid. In terms of biological role, this protein binds specifically to 23S rRNA. Its function is as follows. The globular domain of the protein is located near the polypeptide exit tunnel on the outside of the subunit, while an extended beta-hairpin is found that lines the wall of the exit tunnel in the center of the 70S ribosome. The polypeptide is Large ribosomal subunit protein uL22c (rpl22) (Cuscuta gronovii (Common dodder)).